A 139-amino-acid polypeptide reads, in one-letter code: MKKGVLLNSSISSVIARLGHTDKITIADAGLPIPSSVERIDLALTQGIPDFMSVLQTITHEMQVEAVMLAIEIKNINPLLFSEITRYLHLLEQQQKKPIEIIYVTHEEFKTQLPDNKAVIRTGECSPYANIVLFSGVTF.

The active-site Proton donor is His20. Substrate is bound by residues Asp28, His106, and 128–130 (YAN).

Belongs to the RbsD / FucU family. RbsD subfamily. As to quaternary structure, homodecamer.

It localises to the cytoplasm. It carries out the reaction beta-D-ribopyranose = beta-D-ribofuranose. Its pathway is carbohydrate metabolism; D-ribose degradation; D-ribose 5-phosphate from beta-D-ribopyranose: step 1/2. In terms of biological role, catalyzes the interconversion of beta-pyran and beta-furan forms of D-ribose. In Proteus mirabilis (strain HI4320), this protein is D-ribose pyranase.